The following is a 1766-amino-acid chain: MGGKNKQRTKGNVRPSSSGRAAELLAKERGTVPGFIGFGTSQSDLGYVPAVQGAEEIDSLVDADFRMVLRKLSKRDIITKLKAMQEFGTMCKEREAEVVKGVLPYWPRIYCKISLDHDRRVREATQQSFEQLILKVKKHLAPYLKSIMGYWLIAQCDTYSPAASAAKEAFEKAFPSSKQPEALAFCKDEILNVLQDHLLKETPDTLSDPQTVPEEEREAKFFRILTCSLLALKKLLSMLPKKEMHSLEEKLMSLLSQNKFWKYGKHSTPQVRSAFFELASAFCQFLPELVKAEAPRVCPAVLLSIDDSDAVVCPALWEAVLHAIATIEDCWSHVNARKGVLPKLWTVLREGGRGLATVIYPNILPFISKVPPGITEPKLEYFRTFFSSIIQGLSNERALASPSESSAIITTFMECLRFAILQKIDEDEQRQIHQMLIYDQLIPLTDAVLQEPRLQNGPLFYQIAETLSSWEAKAEVSSDDNTNEVFQKLLSNFWDRLLKMCILHVDKLEADEKTLFAISDMLEVLQNPKTATKPNNRKSLKVKFSDEDESERNTENGKITEVRSNSDSEIQADLQHSSILRKEPLENLVCNLAELSIVYVNEQKSEQHLKFLSALLNFFSSNRVFQVLLEQGSNAGCPPAESQEDMKVHNENPSVQFLYMNLITWLKEDWRKDMHFLVDILYSVLNCCNSDDERKVILDDLTKMDLKWIVFLQIIQKACSSTTKLSLISEWLKGDMLGERLVMLADDLCHLGLKPIATSPESSSSEKWTVLSLVLSQHIKNESLIGETYVERIIDKLQAALSKAKDLSEAGNTEPSVSFICDVASSFFSSVKGCLLMPSSEDLLLTIFQLCAQRQDATHLTVDLLVCKLKHTWISGVNSLVRHLRSMQNQSTFLHKSALWIKNQIQSSSLDVKSLQVLISAVSDLLSTLLEADRQSGCLVGAYVEHVMPNRTEWETLRESLSAEWMHKPLLEGRLSMNCEHLGSCVKLCGTTKLPGHLCTSALLSKMVLLVLENDMVKGNEDAEILVAELLYSLQWIEELENPPYLLLEYLHMLEEMHITYEKFSALSNTTNLQQTIFDRSEEHGRLWSLTMAKVIRGENAVSREMTKLFKTSEGFLPLTEGRLHTLQCLSPFLIEEEKRELVFHCVAKLMTCTQTELSSTDGAFGCLAILNSSLNDKSFGCDHLLPGVLKIIISWKNDNEDSFLFSCNLKETSAQLLGFNIEMIRYLPLLLKYSTAPLADNEWDFIMCSMLAWLETTSENYSLYHVPLVQIFACVSCDLASALSAYFEPAAPKTTENLPVNLVSEWKEFFSEGIHNLLLPLFVKVTGETKTAAEGSFQNSVLTSLGEALTYISKDQLLNHKLPAKFVAGQKTNLPDNLQTLLNTLSPLLLFWARSVQVSVYHMLSKLMPELPKFDDEDLKSYGDEEEELALSPPAALMSVLATQELLLENILECIPVGEFAVIQPLSDEFCLVLGYLLTWKLTLTFFKAASSQLRVLYSQYLRRTKSLNKLLYHLFRLMPENPVFSGLTSEVPNKDTKTFFTEELHLDVKGTGALSSQIPHLACSVYHITLKDLPAMVRLWWNSCEKRVFNVVDKFTSKYVSSVLSSQEISSVQTSTQLFNGMTVKARSAAREVIATYSVDDIFIELIIQLPSNYPLGSITVESGKRVGVAVQQWRNWMLQLSTYLTHQNGSIMEGLSLWKNNVDKRFEGIEDCMICFSVIHGSNYSLPKKACRTCKKKFHSACLYKWFTSSNKSTCPLCRETFF.

Residues 1-11 are compositionally biased toward basic residues; the sequence is MGGKNKQRTKG. A disordered region spans residues 1–20; that stretch reads MGGKNKQRTKGNVRPSSSGR. HEAT repeat units lie at residues 100–138, 193–231, 292–329, 335–372, and 512–549; these read KGVL…KVKK, VLQD…SLLA, AEAP…TIED, NARK…KVPP, and EKTL…DEDE. The disordered stretch occupies residues 529-567; that stretch reads KTATKPNNRKSLKVKFSDEDESERNTENGKITEVRSNSD. Residues 551 to 566 are compositionally biased toward basic and acidic residues; sequence ERNTENGKITEVRSNS. HEAT repeat units follow at residues 606-644, 672-710, 916-953, 1184-1227, 1314-1355, and 1406-1447; these read EQHL…ESQE, KDMH…KWIV, QVLI…NRTE, HLLP…MIRY, GIHN…YISK, and SKLM…TQEL. Residues 1715–1762 form an RING-type zinc finger; it reads CMICFSVIHGSNYSLPKKACRTCKKKFHSACLYKWFTSSNKSTCPLCR.

It belongs to the LTN1 family. As to quaternary structure, component of the ribosome quality control complex (RQC), composed of at least the E3 ubiquitin ligase LTN1 and NEMF associated with the 60S ribosomal subunit. The complex probably also contains TCF25 as well as VCP/p97 and its ubiquitin-binding cofactors.

It localises to the cytoplasm. The protein resides in the cytosol. It carries out the reaction S-ubiquitinyl-[E2 ubiquitin-conjugating enzyme]-L-cysteine + [acceptor protein]-L-lysine = [E2 ubiquitin-conjugating enzyme]-L-cysteine + N(6)-ubiquitinyl-[acceptor protein]-L-lysine.. Its pathway is protein modification; protein ubiquitination. Functionally, E3 ubiquitin-protein ligase component of the ribosome quality control complex (RQC), a ribosome-associated complex that mediates ubiquitination and extraction of incompletely synthesized nascent chains for proteasomal degradation. Within the RQC complex, LTN1 is recruited to stalled 60S ribosomal subunits by NEMF and mediates ubiquitination of stalled nascent chains. Ubiquitination leads to VCP/p97 recruitment for extraction and degradation of the incomplete translation product. In Gallus gallus (Chicken), this protein is E3 ubiquitin-protein ligase listerin (LTN1).